A 302-amino-acid chain; its full sequence is GTPase Era (302 aa).

The Era-type G domain occupies 8–175; the sequence is HSGFVAIIGR…LTTLKGQLPE (168 aa). The segment at 16–23 is G1; it reads GRPNVGKS. 16 to 23 lines the GTP pocket; sequence GRPNVGKS. Residues 42 to 46 form a G2 region; sequence QTTRN. A G3 region spans residues 63 to 66; the sequence is DTPG. Residues 63 to 67 and 125 to 128 each bind GTP; these read DTPGI and NKID. Residues 125-128 are G4; it reads NKID. A G5 region spans residues 154-156; the sequence is ISA. In terms of domain architecture, KH type-2 spans 206–283; it reads TRQEVPHSTA…YLELWVKVQE (78 aa).

The protein belongs to the TRAFAC class TrmE-Era-EngA-EngB-Septin-like GTPase superfamily. Era GTPase family. In terms of assembly, monomer.

It localises to the cytoplasm. The protein resides in the cell membrane. Its function is as follows. An essential GTPase that binds both GDP and GTP, with rapid nucleotide exchange. Plays a role in 16S rRNA processing and 30S ribosomal subunit biogenesis and possibly also in cell cycle regulation and energy metabolism. The sequence is that of GTPase Era from Lactiplantibacillus plantarum (strain ATCC BAA-793 / NCIMB 8826 / WCFS1) (Lactobacillus plantarum).